The sequence spans 449 residues: Exodeoxyribonuclease 7 large subunit (449 aa).

It belongs to the XseA family. Heterooligomer composed of large and small subunits.

The protein resides in the cytoplasm. The catalysed reaction is Exonucleolytic cleavage in either 5'- to 3'- or 3'- to 5'-direction to yield nucleoside 5'-phosphates.. Bidirectionally degrades single-stranded DNA into large acid-insoluble oligonucleotides, which are then degraded further into small acid-soluble oligonucleotides. The sequence is that of Exodeoxyribonuclease 7 large subunit from Salmonella paratyphi A (strain ATCC 9150 / SARB42).